The following is a 1393-amino-acid chain: DNA-directed RNA polymerase subunit beta'' (1393 aa).

Zn(2+) is bound by residues Cys224, Cys295, Cys302, and Cys305.

The protein belongs to the RNA polymerase beta' chain family. RpoC2 subfamily. In plastids the minimal PEP RNA polymerase catalytic core is composed of four subunits: alpha, beta, beta', and beta''. When a (nuclear-encoded) sigma factor is associated with the core the holoenzyme is formed, which can initiate transcription. Zn(2+) serves as cofactor.

The protein localises to the plastid. It localises to the chloroplast. It catalyses the reaction RNA(n) + a ribonucleoside 5'-triphosphate = RNA(n+1) + diphosphate. In terms of biological role, DNA-dependent RNA polymerase catalyzes the transcription of DNA into RNA using the four ribonucleoside triphosphates as substrates. The sequence is that of DNA-directed RNA polymerase subunit beta'' from Manihot esculenta (Cassava).